The chain runs to 113 residues: Large ribosomal subunit protein P1 (113 aa).

A compositionally biased stretch (low complexity) spans 56–66 (TAAAAPAPAAG). Residues 56-113 (TAAAAPAPAAGGSAGGEVEAADDDDEEDAEEEAADEGGDDDGDDDEEADGEGLGALFG) are disordered. The segment covering 74–105 (EAADDDDEEDAEEEAADEGGDDDGDDDEEADG) has biased composition (acidic residues).

The protein belongs to the eukaryotic ribosomal protein P1/P2 family. As to quaternary structure, part of the 50S ribosomal subunit. Homodimer, it forms part of the ribosomal stalk which helps the ribosome interact with GTP-bound translation factors. Forms a heptameric uL10/P0(P1)2(P1)2(P1)2 complex, where uL10/P0 forms an elongated spine to which the P1 dimers bind in a sequential fashion.

Forms part of the ribosomal stalk, playing a central role in the interaction of the ribosome with GTP-bound translation factors. This is Large ribosomal subunit protein P1 from Haloferax volcanii (strain ATCC 29605 / DSM 3757 / JCM 8879 / NBRC 14742 / NCIMB 2012 / VKM B-1768 / DS2) (Halobacterium volcanii).